Reading from the N-terminus, the 40-residue chain is Photosystem II reaction center protein J (40 aa).

The chain crosses the membrane as a helical span at residues Leu10–Tyr30.

This sequence belongs to the PsbJ family. As to quaternary structure, PSII is composed of 1 copy each of membrane proteins PsbA, PsbB, PsbC, PsbD, PsbE, PsbF, PsbH, PsbI, PsbJ, PsbK, PsbL, PsbM, PsbT, PsbX, PsbY, PsbZ, Psb30/Ycf12, at least 3 peripheral proteins of the oxygen-evolving complex and a large number of cofactors. It forms dimeric complexes.

The protein localises to the plastid. Its subcellular location is the chloroplast thylakoid membrane. Functionally, one of the components of the core complex of photosystem II (PSII). PSII is a light-driven water:plastoquinone oxidoreductase that uses light energy to abstract electrons from H(2)O, generating O(2) and a proton gradient subsequently used for ATP formation. It consists of a core antenna complex that captures photons, and an electron transfer chain that converts photonic excitation into a charge separation. This is Photosystem II reaction center protein J from Adiantum capillus-veneris (Maidenhair fern).